Consider the following 122-residue polypeptide: Holo-[acyl-carrier-protein] synthase (122 aa).

Positions 5 and 54 each coordinate Mg(2+).

It belongs to the P-Pant transferase superfamily. AcpS family. It depends on Mg(2+) as a cofactor.

It localises to the cytoplasm. The catalysed reaction is apo-[ACP] + CoA = holo-[ACP] + adenosine 3',5'-bisphosphate + H(+). Its function is as follows. Transfers the 4'-phosphopantetheine moiety from coenzyme A to a Ser of acyl-carrier-protein. The protein is Holo-[acyl-carrier-protein] synthase of Aquifex aeolicus (strain VF5).